Consider the following 100-residue polypeptide: NADH-quinone oxidoreductase subunit K (100 aa).

3 consecutive transmembrane segments (helical) span residues 4–24, 29–49, and 60–80; these read LSHAFSLSIILFILGLIAIIV, LFILLGLEIMINAAASAFVIV, and IMYILVITLSASESAVSLALL.

The protein belongs to the complex I subunit 4L family. In terms of assembly, NDH-1 is composed of 13 different subunits. Subunits NuoA, H, J, K, L, M, N constitute the membrane sector of the complex.

The protein resides in the cell inner membrane. It catalyses the reaction a quinone + NADH + 5 H(+)(in) = a quinol + NAD(+) + 4 H(+)(out). NDH-1 shuttles electrons from NADH, via FMN and iron-sulfur (Fe-S) centers, to quinones in the respiratory chain. The immediate electron acceptor for the enzyme in this species is believed to be ubiquinone. Couples the redox reaction to proton translocation (for every two electrons transferred, four hydrogen ions are translocated across the cytoplasmic membrane), and thus conserves the redox energy in a proton gradient. The protein is NADH-quinone oxidoreductase subunit K of Blochmanniella pennsylvanica (strain BPEN).